The following is a 444-amino-acid chain: Probable D-serine dehydratase (444 aa).

N6-(pyridoxal phosphate)lysine is present on Lys-118.

This sequence belongs to the serine/threonine dehydratase family. DsdA subfamily. Pyridoxal 5'-phosphate serves as cofactor.

The enzyme catalyses D-serine = pyruvate + NH4(+). In Desulfitobacterium hafniense (strain Y51), this protein is Probable D-serine dehydratase.